Reading from the N-terminus, the 596-residue chain is Pescadillo homolog (596 aa).

The BRCT domain occupies 347 to 440 (PTSTLFSEFV…ELVPANLYLP (94 aa)). Residues 449–552 (SPWGDSVGYD…EEKDLKLIMM (104 aa)) form a disordered region. Positions 460 to 596 (AAELAEEEAE…TKAKLKKLEN (137 aa)) form a coiled coil. Positions 463 to 500 (LAEEEAESEEEEEVSDEAEGDEEATLAAEEDEEDEAEA) are enriched in acidic residues. Over residues 501–510 (EELRAQKELE) the composition is skewed to basic and acidic residues. Low complexity predominate over residues 519–529 (SEAADSAAPSK).

It belongs to the pescadillo family. As to quaternary structure, component of the NOP7 complex, composed of ERB1, NOP7 and YTM1. The complex is held together by ERB1, which interacts with NOP7 via its N-terminal domain and with YTM1 via a high-affinity interaction between the seven-bladed beta-propeller domains of the 2 proteins. The NOP7 complex associates with the 66S pre-ribosome.

It is found in the nucleus. Its subcellular location is the nucleolus. The protein localises to the nucleoplasm. Functionally, component of the NOP7 complex, which is required for maturation of the 25S and 5.8S ribosomal RNAs and formation of the 60S ribosome. This Eremothecium gossypii (strain ATCC 10895 / CBS 109.51 / FGSC 9923 / NRRL Y-1056) (Yeast) protein is Pescadillo homolog.